We begin with the raw amino-acid sequence, 406 residues long: ATP-dependent RNA helicase eIF4A (406 aa).

The short motif at 25–53 is the Q motif element; sequence DSFDAMDLKPELLRGVYAYGFERPSAIQQ. The Helicase ATP-binding domain maps to 56 to 226; that stretch reads ILPIIKGNDV…TKFMRDPVRI (171 aa). 69 to 76 is a binding site for ATP; that stretch reads AQSGTGKT. The DEAD box signature appears at 174–177; sequence DEAD. The Helicase C-terminal domain occupies 237–398; it reads GIKQFYIAVE…EMPMNVAGKF (162 aa).

It belongs to the DEAD box helicase family. eIF4A subfamily. As to quaternary structure, component of the eIF4F complex, which composition varies with external and internal environmental conditions. It is composed of at least eIF4A, eIF4E and eIF4G.

The protein resides in the cytoplasm. It carries out the reaction ATP + H2O = ADP + phosphate + H(+). ATP-dependent RNA helicase which is a subunit of the eIF4F complex involved in cap recognition and is required for mRNA binding to ribosome. In the current model of translation initiation, eIF4A unwinds RNA secondary structures in the 5'-UTR of mRNAs which is necessary to allow efficient binding of the small ribosomal subunit, and subsequent scanning for the initiator codon. This Aspergillus fumigatus (strain ATCC MYA-4609 / CBS 101355 / FGSC A1100 / Af293) (Neosartorya fumigata) protein is ATP-dependent RNA helicase eIF4A (tif1).